The following is a 370-amino-acid chain: MRPDCTDFRQLFLDDVPMMDMRAPVEFAKGAFPGVVNLPLMNDQERQKVGTCYKQQGQAAAIALGHQLVSGTTKQARMDAWVAFTQANPQGYLYCFRGGLRSQIVQGWLRDEAGIQYPRVKGGYKAMRTFLLETTQQAVAQCDFVLLGGLTGTGKTDVLHQLDNVLDLEGHANHRGSSFGKRATAQPAQIDFENQLAIDVLKKRARGCEQFVLEDEGRIVGSCTVPLELYQGMQQYPLVWLEDSFANRVERILRDYVVNLSAEFIAVHGEEDGRRLFAERMLQSMANIYKRLGGERYQRLSEILRLALEEQQRSGAVDLHRGWIEGLLNEYYDPMYAYQRAAKAERIEFAGDAVEVREYLKARARRQPHH.

The Rhodanese domain occupies 12 to 136 (FLDDVPMMDM…MRTFLLETTQ (125 aa)). Cys95 functions as the S-selanylcysteine intermediate in the catalytic mechanism.

This sequence belongs to the SelU family. Monomer.

It catalyses the reaction 5-methylaminomethyl-2-thiouridine(34) in tRNA + selenophosphate + (2E)-geranyl diphosphate + H2O + H(+) = 5-methylaminomethyl-2-selenouridine(34) in tRNA + (2E)-thiogeraniol + phosphate + diphosphate. The catalysed reaction is 5-methylaminomethyl-2-thiouridine(34) in tRNA + (2E)-geranyl diphosphate = 5-methylaminomethyl-S-(2E)-geranyl-thiouridine(34) in tRNA + diphosphate. The enzyme catalyses 5-methylaminomethyl-S-(2E)-geranyl-thiouridine(34) in tRNA + selenophosphate + H(+) = 5-methylaminomethyl-2-(Se-phospho)selenouridine(34) in tRNA + (2E)-thiogeraniol. It carries out the reaction 5-methylaminomethyl-2-(Se-phospho)selenouridine(34) in tRNA + H2O = 5-methylaminomethyl-2-selenouridine(34) in tRNA + phosphate. Functionally, involved in the post-transcriptional modification of the uridine at the wobble position (U34) of tRNA(Lys), tRNA(Glu) and tRNA(Gln). Catalyzes the conversion of 2-thiouridine (S2U-RNA) to 2-selenouridine (Se2U-RNA). Acts in a two-step process involving geranylation of 2-thiouridine (S2U) to S-geranyl-2-thiouridine (geS2U) and subsequent selenation of the latter derivative to 2-selenouridine (Se2U) in the tRNA chain. The polypeptide is tRNA 2-selenouridine synthase (Pseudomonas putida (strain GB-1)).